Here is a 162-residue protein sequence, read N- to C-terminus: Probable chemoreceptor glutamine deamidase CheD 3 (162 aa).

The protein belongs to the CheD family.

The catalysed reaction is L-glutaminyl-[protein] + H2O = L-glutamyl-[protein] + NH4(+). Its function is as follows. Probably deamidates glutamine residues to glutamate on methyl-accepting chemotaxis receptors (MCPs), playing an important role in chemotaxis. This Geobacter sulfurreducens (strain ATCC 51573 / DSM 12127 / PCA) protein is Probable chemoreceptor glutamine deamidase CheD 3.